The sequence spans 61 residues: Small ribosomal subunit protein uS14 (61 aa).

The Zn(2+) site is built by Cys24, Cys27, Cys40, and Cys43.

The protein belongs to the universal ribosomal protein uS14 family. Zinc-binding uS14 subfamily. Part of the 30S ribosomal subunit. Contacts proteins S3 and S10. Requires Zn(2+) as cofactor.

Functionally, binds 16S rRNA, required for the assembly of 30S particles and may also be responsible for determining the conformation of the 16S rRNA at the A site. This is Small ribosomal subunit protein uS14 from Maridesulfovibrio salexigens (strain ATCC 14822 / DSM 2638 / NCIMB 8403 / VKM B-1763) (Desulfovibrio salexigens).